Reading from the N-terminus, the 519-residue chain is MSVPKSCTILVAGGGPAGSYAAAALAREGNDVVLLEADQHPRYHIGESMLPSLRPLLRFIDLEDKFDAHGFQKKLGAAFKLTSKREGSHGPRGYSWNVVRSESDEILFNHARESGAQAFQGIKINAIEFEPYEEEYPNGEKVANPGKPTSAKWSSKDGSSGDIAFKYLVDATGRIGIMSTKYLKNRHYNEGLKNLAIWGYYKNNIPWAQGTPRENQPFFEGMRDGAGWCWTIPLHNGTVSVGAVMRKDLFFEKKKSLGENATNTQIMAECMKLCPTIGELLAPAELVSDIKQATDYSYSATAYAGPNFRIVGDAGCFIDPFFSSGHHLAVAGALAAAVSINASIKGDCTEYEASRWHAKKVDEGYTLFLLVVMAALKQIRMQENPVLSDVDEDGFDRAFQFLRPEAVKKFTKEDVAQTIDFAVHALNNMAELDMDIPEHMINGDKEGENGVTNGNNGAAKTAGLASNMEKLTNDEEKVLNGLRILGKAAPGGTLADFEGTAIDGLMPRLEHGKLGLNKV.

Positions 1-21 (MSVPKSCTILVAGGGPAGSYA) are cleaved as a signal peptide. FAD is bound by residues glycine 14, alanine 17, and glutamate 47. 2 residues coordinate chloride: serine 324 and glycine 325.

The protein belongs to the flavin-dependent halogenase family.

The protein operates within secondary metabolite biosynthesis. Its function is as follows. Flavin-dependent halogenase; part of the gene cluster that mediates the biosynthesis of radicicol, a resorcylic acid lactone (RAL) that irreversibly inhibits the HSP90 molecular chaperone, an important target for cancer chemotherapy. Within the cluster, rdc2 is involved in the chlorination of the resorcylic acid lactone (RAL) structure to convert monocillin I into radicicol. Also chlorinates monocillin II to produce 6-cholomonocillin II and monocilllin IV to produce 13-chloromonocillin IV. In contrast to most fungal halogenases, rdc2 has a broad substrate specificity and can accept a variety of macrolactones as the substrates to generate chlorinated derivatives, including dihydroresorcylide, zearalenone, curvularin, or even curcumin. Rdc2 is able to dichlorinate dihydroresorcylide and monocillin IV. Dihydroresorcylide is first chlorinated at position 11 to produce 11-chlorodihydroresorcylide which can be further chlorinated by rdc2 at possition 13. Mororeover, rdc2 can incorporate bromine into dihydroresorcylide to yield the corresponding mono- and di-brominated derivatives. Finally, rdc2 is also able to halogenate the isoquinolines 4-hydroxyisoquinoline and 6-hydroxyisoquinoline into 3-chloro-4-hydroxyisoquinoline and 5-chloro-6-hydroxyisoquinoline, respectively. The radicicol cluster encodes only two apparent post-PKS enzymes, a cytochrome P450 monooxygenase (rdc4) and a non-heme halogenase (rdc2) that could introduce the epoxide and the chlorine, respectively. If this cluster includes all the genes required for radicicol biosynthesis, the remaining structural features of radicicol are presumably generated by the PKSs rdc1 and rdc5. The C-2' ketone could arise if the R-PKS rdc5 and NR-PKS rdc1 each carry out four iterations, in contrast to the five iteration-three iteration split for the hypothemycin PKSs. The origin of the cis 5',6' double bond is not known. The radicicol R-PKS rdc5 ER domain may catalyze either double bond isomerization or reduction in the third iteration. The sequence is that of Flavin-dependent halogenase rdc2 from Metacordyceps chlamydosporia (Nematophagous fungus).